The primary structure comprises 163 residues: ATP synthase subunit b 1 (163 aa).

Residues 5–25 (LDATFFAFVGLVLFLALVVYL) form a helical membrane-spanning segment.

This sequence belongs to the ATPase B chain family. As to quaternary structure, F-type ATPases have 2 components, F(1) - the catalytic core - and F(0) - the membrane proton channel. F(1) has five subunits: alpha(3), beta(3), gamma(1), delta(1), epsilon(1). F(0) has three main subunits: a(1), b(2) and c(10-14). The alpha and beta chains form an alternating ring which encloses part of the gamma chain. F(1) is attached to F(0) by a central stalk formed by the gamma and epsilon chains, while a peripheral stalk is formed by the delta and b chains.

Its subcellular location is the cell inner membrane. Functionally, f(1)F(0) ATP synthase produces ATP from ADP in the presence of a proton or sodium gradient. F-type ATPases consist of two structural domains, F(1) containing the extramembraneous catalytic core and F(0) containing the membrane proton channel, linked together by a central stalk and a peripheral stalk. During catalysis, ATP synthesis in the catalytic domain of F(1) is coupled via a rotary mechanism of the central stalk subunits to proton translocation. Its function is as follows. Component of the F(0) channel, it forms part of the peripheral stalk, linking F(1) to F(0). The chain is ATP synthase subunit b 1 from Rhizobium etli (strain CIAT 652).